The sequence spans 274 residues: GCN5-related N-acetyltransferase 7, chloroplastic (274 aa).

The transit peptide at 1 to 65 directs the protein to the chloroplast; it reads MAFLCSSLPS…STFVISESVS (65 aa). The 193-residue stretch at 75-267 folds into the N-acetyltransferase domain; it reads LRVRTFNELN…QRLLLWLALP (193 aa). Acetyl-CoA-binding positions include 189 to 191, 197 to 202, 228 to 230, and Tyr-235; these read VCV, RNGVGY, and NEA. Tyr-235 functions as the Proton donor in the catalytic mechanism.

The protein belongs to the acetyltransferase family. GNAT subfamily. As to quaternary structure, oligomer. In terms of processing, autoacetylated. In terms of tissue distribution, expressed in green tissues.

The protein resides in the plastid. The protein localises to the chloroplast. The catalysed reaction is an N-terminal L-alpha-aminoacyl-[protein] + acetyl-CoA = N-terminal N(alpha)-acetyl-L-alpha-aminoacyl-[protein] + CoA + H(+). The enzyme catalyses L-lysyl-[protein] + acetyl-CoA = N(6)-acetyl-L-lysyl-[protein] + CoA + H(+). It catalyses the reaction N-terminal L-alanyl-[protein] + acetyl-CoA = N-terminal N(alpha)-acetyl-L-alanyl-[protein] + CoA + H(+). It carries out the reaction N-terminal L-seryl-[protein] + acetyl-CoA = N-terminal N(alpha)-acetyl-L-seryl-[protein] + CoA + H(+). The catalysed reaction is N-terminal L-threonyl-[protein] + acetyl-CoA = N-terminal N(alpha)-acetyl-L-threonyl-[protein] + CoA + H(+). The enzyme catalyses N-terminal L-methionyl-[protein] + acetyl-CoA = N-terminal N(alpha)-acetyl-L-methionyl-[protein] + CoA + H(+). It catalyses the reaction N-terminal L-prolyl-[protein] + acetyl-CoA = N-terminal N(alpha)-acetyl-L-prolyl-[protein] + CoA + H(+). It carries out the reaction N-terminal L-valyl-[protein] + acetyl-CoA = N-terminal N(alpha)-acetyl-L-valyl-[protein] + CoA + H(+). Protein acetyltransferase with dual specificity triggering both N-alpha-acetylation (NTA), with a large spectrum of modified N-termini, including methionine, alanine, serine, threonine and to a lower extent valine and proline as substrates, and epsilon-lysine acetylation (KA). This Arabidopsis thaliana (Mouse-ear cress) protein is GCN5-related N-acetyltransferase 7, chloroplastic.